Reading from the N-terminus, the 315-residue chain is Putative methyltransferase NSUN5C (315 aa).

Residues 50-56 (VPPQAIK), D74, R79, and D121 contribute to the S-adenosyl-L-methionine site. The active-site Nucleophile is the C175. Residues 245–269 (TSASQAKASAPERTPSPAPKRKKRA) form a disordered region.

The protein belongs to the class I-like SAM-binding methyltransferase superfamily. RsmB/NOP family. In terms of tissue distribution, ubiquitous.

In terms of biological role, may have S-adenosyl-L-methionine-dependent methyl-transferase activity. The sequence is that of Putative methyltransferase NSUN5C (NSUN5P2) from Homo sapiens (Human).